A 343-amino-acid chain; its full sequence is Adenosine kinase (343 aa).

D296 is a catalytic residue.

The protein belongs to the carbohydrate kinase PfkB family. Requires Mg(2+) as cofactor.

It carries out the reaction adenosine + ATP = AMP + ADP + H(+). It participates in purine metabolism; AMP biosynthesis via salvage pathway; AMP from adenosine: step 1/1. ATP dependent phosphorylation of adenosine and other related nucleoside analogs to monophosphate derivatives. Can also act on the cytokinin isopentenyladenosine to produce isopentenyladenosine monophosphate. The chain is Adenosine kinase (ADK) from Physcomitrium patens (Spreading-leaved earth moss).